The sequence spans 329 residues: Serine dehydratase-like (329 aa).

Methionine 1 is modified (N-acetylmethionine). Position 48 is an N6-(pyridoxal phosphate)lysine (lysine 48).

The protein belongs to the serine/threonine dehydratase family. As to quaternary structure, monomer. Homodimer. Pyridoxal 5'-phosphate is required as a cofactor.

It carries out the reaction L-serine = pyruvate + NH4(+). It catalyses the reaction L-threonine = 2-oxobutanoate + NH4(+). The catalysed reaction is L-glutamate = D-glutamate. Serine dehydratase activity is inhibited by manganese chloride, ferrous chloride, cobalt chloride, cupric chloride, nickel chloride and zinc chloride. Glutamate racemase activity is inhibited by manganese chloride, ferrous chloride, cupric chloride and zinc chloride. Catalyzes the pyridoxal-phosphate-dependent dehydrative deamination of L-threonine and L-serine to ammonia and alpha-ketobutyrate and pyruvate, respectively. Also exhibits racemase activity towards L-glutamate and D-glutamate. In Rattus norvegicus (Rat), this protein is Serine dehydratase-like (Sdsl).